Here is a 647-residue protein sequence, read N- to C-terminus: Acetyl-coenzyme A synthetase (647 aa).

CoA is bound by residues 190–193 (RGGK), Thr-310, and Asn-334. ATP-binding positions include 386-388 (GEP), 410-415 (DTWWQT), Asp-499, and Arg-514. Ser-522 contributes to the CoA binding site. Position 525 (Arg-525) interacts with ATP. Residues Val-536, His-538, and Val-541 each coordinate Mg(2+). Position 583 (Arg-583) interacts with CoA. An N6-acetyllysine modification is found at Lys-608.

It belongs to the ATP-dependent AMP-binding enzyme family. Requires Mg(2+) as cofactor. In terms of processing, acetylated. Deacetylation by the SIR2-homolog deacetylase activates the enzyme.

It carries out the reaction acetate + ATP + CoA = acetyl-CoA + AMP + diphosphate. Catalyzes the conversion of acetate into acetyl-CoA (AcCoA), an essential intermediate at the junction of anabolic and catabolic pathways. AcsA undergoes a two-step reaction. In the first half reaction, AcsA combines acetate with ATP to form acetyl-adenylate (AcAMP) intermediate. In the second half reaction, it can then transfer the acetyl group from AcAMP to the sulfhydryl group of CoA, forming the product AcCoA. The chain is Acetyl-coenzyme A synthetase from Xanthomonas campestris pv. campestris (strain 8004).